Reading from the N-terminus, the 126-residue chain is Ribosome-binding factor A (126 aa).

It belongs to the RbfA family. In terms of assembly, monomer. Binds 30S ribosomal subunits, but not 50S ribosomal subunits or 70S ribosomes.

The protein resides in the cytoplasm. Functionally, one of several proteins that assist in the late maturation steps of the functional core of the 30S ribosomal subunit. Associates with free 30S ribosomal subunits (but not with 30S subunits that are part of 70S ribosomes or polysomes). Required for efficient processing of 16S rRNA. May interact with the 5'-terminal helix region of 16S rRNA. This chain is Ribosome-binding factor A, found in Histophilus somni (strain 129Pt) (Haemophilus somnus).